The following is a 257-amino-acid chain: tRNA uridine(34) hydroxylase (257 aa).

The region spanning 128 to 222 is the Rhodanese domain; that stretch reads NGRRLVMLDA…YFEQVGGEGY (95 aa). Cys-182 functions as the Cysteine persulfide intermediate in the catalytic mechanism.

Belongs to the TrhO family.

It catalyses the reaction uridine(34) in tRNA + AH2 + O2 = 5-hydroxyuridine(34) in tRNA + A + H2O. Its function is as follows. Catalyzes oxygen-dependent 5-hydroxyuridine (ho5U) modification at position 34 in tRNAs. The protein is tRNA uridine(34) hydroxylase of Xylella fastidiosa (strain M23).